The chain runs to 527 residues: Putative WEB family protein At4g17210 (527 aa).

Disordered stretches follow at residues 1 to 28 and 46 to 70; these read MAKIRTDAPVMPPETPPRSSEVGEIDTR and FSKKQPPRLSSSSSSQSQDTTTDVS. A compositionally biased stretch (low complexity) spans 55 to 68; that stretch reads SSSSSSQSQDTTTD. 3 coiled-coil regions span residues 95-159, 202-389, and 436-513; these read AAKA…YILI, SNKI…AKHM, and KKIR…EAHS.

It belongs to the WEB family.

The sequence is that of Putative WEB family protein At4g17210 from Arabidopsis thaliana (Mouse-ear cress).